A 159-amino-acid polypeptide reads, in one-letter code: Protein-export protein SecB (159 aa).

It belongs to the SecB family. As to quaternary structure, homotetramer, a dimer of dimers. One homotetramer interacts with 1 SecA dimer.

It is found in the cytoplasm. In terms of biological role, one of the proteins required for the normal export of preproteins out of the cell cytoplasm. It is a molecular chaperone that binds to a subset of precursor proteins, maintaining them in a translocation-competent state. It also specifically binds to its receptor SecA. The protein is Protein-export protein SecB of Bartonella bacilliformis (strain ATCC 35685 / KC583 / Herrer 020/F12,63).